Here is a 127-residue protein sequence, read N- to C-terminus: Snaclec CHH-B subunit alpha (127 aa).

Disulfide bonds link Cys-4-Cys-15, Cys-32-Cys-120, and Cys-95-Cys-112. The C-type lectin domain occupies 11–121 (YDRYCYKPFK…CEQQHSFICK (111 aa)).

The protein belongs to the snaclec family. In terms of assembly, heterodimer of subunits alpha and beta; disulfide-linked. As to expression, expressed by the venom gland.

It localises to the secreted. Binds to the subunit GPIbalpha (GP1BA) of the platelet GPIb/V/IX receptor system. It inhibits ristocetin- and vWF-induced platelet aggregation in platelet-rich plasma by inhibiting the binding of vWF to GPIbalpha. The protein is Snaclec CHH-B subunit alpha of Crotalus horridus (Timber rattlesnake).